Consider the following 997-residue polypeptide: Translation initiation factor IF-2 (997 aa).

Residues 36–415 (SMAGSLTTEE…ATQPLKAAKR (380 aa)) are disordered. Basic and acidic residues-rich tracts occupy residues 45–65 (EAAR…ERSG) and 94–107 (AREE…EKPA). Positions 108–126 (AVEAPAQAEPVAEAPAASP) are enriched in low complexity. Residues 127 to 147 (HKVEEKAAPEAAKAEPAEKAK) are compositionally biased toward basic and acidic residues. A compositionally biased stretch (low complexity) spans 151–162 (ARVVSAARVISR). Over residues 163 to 181 (PGEEEEKKPEPVVESKPEP) the composition is skewed to basic and acidic residues. Positions 182–196 (VAEISPVAAALAARE) are enriched in low complexity. 2 stretches are compositionally biased toward basic and acidic residues: residues 197 to 214 (AAAR…EKGA) and 241 to 252 (PEARTEAWKDAD). A compositionally biased stretch (gly residues) spans 300-309 (GRPGAPGGPR). Positions 316-335 (PPRPGGPRPSGPGGPRPAGG) are enriched in pro residues. Residues 378–388 (GGRRDDDDSQR) show a composition bias toward basic and acidic residues. Residues 390–399 (NRGKGRRKGG) show a composition bias toward basic residues. In terms of domain architecture, tr-type G spans 496–665 (PRPPVVTIMG…ALQSEIMELK (170 aa)). A G1 region spans residues 505–512 (GHVDHGKT). 505 to 512 (GHVDHGKT) is a binding site for GTP. Residues 530–534 (GITQH) form a G2 region. A G3 region spans residues 551 to 554 (DTPG). GTP contacts are provided by residues 551-555 (DTPGH) and 605-608 (NKMD). The tract at residues 605–608 (NKMD) is G4. Residues 641–643 (AAK) form a G5 region.

Belongs to the TRAFAC class translation factor GTPase superfamily. Classic translation factor GTPase family. IF-2 subfamily.

It localises to the cytoplasm. In terms of biological role, one of the essential components for the initiation of protein synthesis. Protects formylmethionyl-tRNA from spontaneous hydrolysis and promotes its binding to the 30S ribosomal subunits. Also involved in the hydrolysis of GTP during the formation of the 70S ribosomal complex. This Desulfovibrio desulfuricans (strain ATCC 27774 / DSM 6949 / MB) protein is Translation initiation factor IF-2.